The chain runs to 253 residues: Uridine phosphorylase (253 aa).

This sequence belongs to the PNP/UDP phosphorylase family. Homohexamer.

Its subcellular location is the cytoplasm. It carries out the reaction uridine + phosphate = alpha-D-ribose 1-phosphate + uracil. It functions in the pathway pyrimidine metabolism; UMP biosynthesis via salvage pathway; uracil from uridine (phosphorylase route): step 1/1. Its function is as follows. Catalyzes the reversible phosphorylytic cleavage of uridine to uracil and ribose-1-phosphate. Shows weak activity towards deoxyuridine and thymidine. The produced molecules are then utilized as carbon and energy sources or in the rescue of pyrimidine bases for nucleotide synthesis. This chain is Uridine phosphorylase, found in Escherichia coli (strain K12).